The following is a 1383-amino-acid chain: Insulin receptor (1383 aa).

The first 26 residues, 1 to 26 (MGSGRGCETTAVPLLMAVAVAGGTAG), serve as a signal peptide directing secretion. Extracellular-facing segments span residues 27–759 (HLYP…TRPS) and 764–957 (SLEE…NIAK). C34 and C52 form a disulfide bridge. N-linked (GlcNAc...) asparagine glycans are attached at residues N42, N51, N104, and N137. 9 disulfides stabilise this stretch: C152/C181, C185/C208, C195/C214, C218/C227, C222/C233, C234/C242, C238/C251, C254/C263, and C267/C279. N-linked (GlcNAc...) asparagine glycosylation occurs at N241. N281 carries an N-linked (GlcNAc...) asparagine glycan. Disulfide bonds link C285/C310, C292/C300, C314/C327, C330/C334, and C338/C359. N321 carries an N-linked (GlcNAc...) asparagine glycan. The N-linked (GlcNAc...) asparagine glycan is linked to N363. Position 399 is a phosphoserine (S399). Y400 is subject to Phosphotyrosine. The residue at position 406 (S406) is a Phosphoserine. 2 N-linked (GlcNAc...) asparagine glycosylation sites follow: N423 and N444. C461 and C494 are joined by a disulfide. N-linked (GlcNAc...) asparagine glycans are attached at residues N540, N634, N652, and N699. Positions 625-727 (VPLDPISVSN…SQILKELEES (103 aa)) constitute a Fibronectin type-III 1 domain. Cysteines 675 and 900 form a disulfide. The interval 687–709 (SPPFESDDSQKHNQSEYDDSASE) is disordered. The tract at residues 734-742 (EDYLHNVVF) is insulin-binding. Residues 747 to 783 (TSSGNGAEDTRPSRKRRSLEEVGNVTATTPTLPDFPN) are disordered. 2 consecutive Fibronectin type-III domains span residues 754-848 (EDTR…TMPE) and 854-948 (IVGP…VTDY). 4 N-linked (GlcNAc...) asparagine glycosylation sites follow: N770, N783, N921, and N934. Residues 771-783 (VTATTPTLPDFPN) are compositionally biased toward polar residues. Residues 958–978 (IIIGPLIFVFLFSVVIGSIYL) form a helical membrane-spanning segment. The Cytoplasmic segment spans residues 979-1383 (FLRKRQPDGP…VLTLPRSNPS (405 aa)). The important for interaction with IRS1, SHC1 and STAT5B stretch occupies residues 997–1000 (NPEY). A Phosphotyrosine; by autocatalysis modification is found at Y1000. Residues 1024 to 1299 (ITLLRELGQG…LLKDDLHPSF (276 aa)) enclose the Protein kinase domain. S1034 and K1058 together coordinate ATP. A Glycyl lysine isopeptide (Lys-Gly) (interchain with G-Cter in ubiquitin) cross-link involves residue K1080. C1084 is modified (S-nitrosocysteine). 1105–1111 (ELMAHGD) is a binding site for ATP. D1160 (proton donor/acceptor) is an active-site residue. ATP is bound by residues 1164 to 1165 (RN) and D1178. Phosphotyrosine; by autocatalysis occurs at positions 1186, 1190, 1191, 1356, and 1362. The segment at 1361–1383 (PYTHMNGGKKNGRVLTLPRSNPS) is disordered. The interval 1362–1365 (YTHM) is PIK3R1 binding.

This sequence belongs to the protein kinase superfamily. Tyr protein kinase family. Insulin receptor subfamily. Tetramer of 2 alpha and 2 beta chains linked by disulfide bonds. The alpha chains carry the insulin-binding regions, while the beta chains carry the kinase domain. Forms a hybrid receptor with IGF1R, the hybrid is a tetramer consisting of 1 alpha chain and 1 beta chain of INSR and 1 alpha chain and 1 beta chain of IGF1R. Interacts with SORBS1 but dissociates from it following insulin stimulation. Binds SH2B2. Activated form of INSR interacts (via Tyr-1000) with the PTB/PID domains of IRS1 and SHC1. The sequences surrounding the phosphorylated NPXY motif contribute differentially to either IRS1 or SHC1 recognition. Interacts (via tyrosines in the C-terminus) with IRS2 (via PTB domain and 591-786 AA); the 591-786 would be the primary anchor of IRS2 to INSR while the PTB domain would have a stabilizing action on the interaction with INSR. Interacts with the SH2 domains of the 85 kDa regulatory subunit of PI3K (PIK3R1) in vitro, when autophosphorylated on tyrosine residues. Interacts with SOCS7. Interacts (via the phosphorylated Tyr-1000), with SOCS3. Interacts (via the phosphorylated Tyr-1186, Tyr-1190, Tyr-1191) with SOCS1. Interacts with ARRB2. Interacts with GRB10; this interaction blocks the association between IRS1/IRS2 and INSR, significantly reduces insulin-stimulated tyrosine phosphorylation of IRS1 and IRS2 and thus decreases insulin signaling. Interacts with PDPK1. Interacts (via Tyr-1191) with GRB14 (via BPS domain); this interaction protects the tyrosines in the activation loop from dephosphorylation, but promotes dephosphorylation of Tyr-1000, this results in decreased interaction with, and phosphorylation of, IRS1. Interacts (via subunit alpha) with ENPP1 (via 485-599 AA); this interaction blocks autophosphorylation. Interacts with PTPRE; this interaction is dependent of Tyr-1186, Tyr-1190 and Tyr-1191 of the INSR. Interacts with STAT5B (via SH2 domain). Interacts with PTPRF. Interacts with GRB7. Interacts with CAV2 (tyrosine-phosphorylated form); the interaction is increased with 'Tyr-27'phosphorylation of CAV2. Interacts with ATIC; ATIC together with PRKAA2/AMPK2 and HACD3/PTPLAD1 is proposed to be part of a signaling netwok regulating INSR autophosphorylation and endocytosis. Interacts with the insulin receptor SORL1; this interaction strongly increases its surface exposure, hence strengthens insulin signal reception. Interacts (tyrosine phosphorylated) with CCDC88A/GIV (via SH2-like region); binding requires autophosphorylation of the Insr C-terminal region. Interacts with GNAI3; the interaction is probably mediated by CCDC88A/GIV. Interacts with LMBRD1. Interacts (in response to insulin stimulation) with NCK1; this interaction may recruit PTPN1 to mediate INSR dephosphorylation. Interacts with CD248; this interaction diminishes INSR autophosphorylation. Post-translationally, after being transported from the endoplasmic reticulum to the Golgi apparatus, the single glycosylated precursor is further glycosylated and then cleaved, followed by its transport to the plasma membrane. Autophosphorylated on tyrosine residues in response to insulin. Phosphorylation of Tyr-1000 is required for binding to IRS1, SHC1 and STAT5B. May also be phosphorylated at Tyr-1186 and Tyr-1191 by mTORC2. Dephosphorylated by PTPRE at Tyr-1000, Tyr-1186, Tyr-1190 and Tyr-1191. Dephosphorylated by PTPRF and PTPN1. Dephosphorylated by PTPN2; down-regulates insulin-induced signaling. In terms of processing, S-nitrosylation at Cys-1084 by BLVRB inhibits the receptor tyrosine kinase, thereby inhibiting insulin signaling. Post-translationally, ubiquitinated by MARCHF1; leading to degradation thereby reducing surface INSR expression.

It localises to the cell membrane. The protein localises to the late endosome. The protein resides in the lysosome. It catalyses the reaction L-tyrosyl-[protein] + ATP = O-phospho-L-tyrosyl-[protein] + ADP + H(+). Its activity is regulated as follows. Activated in response to insulin. Autophosphorylation activates the kinase activity. PTPN1, PTPRE and PTPRF dephosphorylate important tyrosine residues, thereby reducing INSR activity. Inhibited by ENPP1. GRB10 and GRB14 inhibit the catalytic activity of the INSR, they block access of substrates to the activated receptor. SOCS1 and SOCS3 act as negative regulators of INSR activity, they bind to the activated INRS and interfere with the phosphorylation of INSR substrates. Its function is as follows. Receptor tyrosine kinase which mediates the pleiotropic actions of insulin. Binding of insulin leads to phosphorylation of several intracellular substrates, including, insulin receptor substrates (IRS1, 2, 3, 4), SHC, GAB1, CBL and other signaling intermediates. Each of these phosphorylated proteins serve as docking proteins for other signaling proteins that contain Src-homology-2 domains (SH2 domain) that specifically recognize different phosphotyrosine residues, including the p85 regulatory subunit of PI3K and SHP2. Phosphorylation of IRSs proteins lead to the activation of two main signaling pathways: the PI3K-AKT/PKB pathway, which is responsible for most of the metabolic actions of insulin, and the Ras-MAPK pathway, which regulates expression of some genes and cooperates with the PI3K pathway to control cell growth and differentiation. Binding of the SH2 domains of PI3K to phosphotyrosines on IRS1 leads to the activation of PI3K and the generation of phosphatidylinositol-(3, 4, 5)-triphosphate (PIP3), a lipid second messenger, which activates several PIP3-dependent serine/threonine kinases, such as PDPK1 and subsequently AKT/PKB. The net effect of this pathway is to produce a translocation of the glucose transporter SLC2A4/GLUT4 from cytoplasmic vesicles to the cell membrane to facilitate glucose transport. Moreover, upon insulin stimulation, activated AKT/PKB is responsible for: anti-apoptotic effect of insulin by inducing phosphorylation of BAD; regulates the expression of gluconeogenic and lipogenic enzymes by controlling the activity of the winged helix or forkhead (FOX) class of transcription factors. Another pathway regulated by PI3K-AKT/PKB activation is mTORC1 signaling pathway which regulates cell growth and metabolism and integrates signals from insulin. AKT mediates insulin-stimulated protein synthesis by phosphorylating TSC2 thereby activating mTORC1 pathway. The Ras/RAF/MAP2K/MAPK pathway is mainly involved in mediating cell growth, survival and cellular differentiation of insulin. Phosphorylated IRS1 recruits GRB2/SOS complex, which triggers the activation of the Ras/RAF/MAP2K/MAPK pathway. In addition to binding insulin, the insulin receptor can bind insulin-like growth factors (IGFI and IGFII). When present in a hybrid receptor with IGF1R, binds IGF1. In adipocytes, inhibits lipolysis. The sequence is that of Insulin receptor (Insr) from Rattus norvegicus (Rat).